The following is a 1263-amino-acid chain: DNA-directed RNA polymerase subunit beta (1263 aa).

This sequence belongs to the RNA polymerase beta chain family. The RNAP catalytic core consists of 2 alpha, 1 beta, 1 beta' and 1 omega subunit. When a sigma factor is associated with the core the holoenzyme is formed, which can initiate transcription.

It carries out the reaction RNA(n) + a ribonucleoside 5'-triphosphate = RNA(n+1) + diphosphate. DNA-dependent RNA polymerase catalyzes the transcription of DNA into RNA using the four ribonucleoside triphosphates as substrates. The polypeptide is DNA-directed RNA polymerase subunit beta (Thermotoga sp. (strain RQ2)).